Here is a 356-residue protein sequence, read N- to C-terminus: Protein MGF 360-10L (356 aa).

The stretch at 58–90 (DLNTALMIAAKENNYQLIKLFTEWGANINYGYI) is one ANK repeat. N-linked (GlcNAc...) asparagine; by host glycosylation occurs at N125. A run of 2 helical transmembrane segments spans residues 206–228 (LNTW…YLYE) and 249–271 (NFLT…LAAI). The N-linked (GlcNAc...) asparagine; by host glycan is linked to N352.

This sequence belongs to the asfivirus MGF 360 family.

The protein localises to the host membrane. Its function is as follows. Plays a role in virus cell tropism, and may be required for efficient virus replication in macrophages. This Ornithodoros (relapsing fever ticks) protein is Protein MGF 360-10L.